Reading from the N-terminus, the 269-residue chain is MLQIPPENVWIALAVTLAAGLATAIGSLLVLFSRRPNPRLLAFGLAFAGGAMVYVSLSEILNKSIASFALAYGERTGFTYGTLAFLAGVIVIVLIDHFIPNPHDSLDKQDPAFRENSREYLKRVALLTSVAITAHNFPEGLATFFATLESPSVGMPLAFAIAIHNIPEGIAIAVPVYFATQNKFYAFSASLLSGLAEPVGAALGYWLLSGSLSHATFGWVFGLIAGVMVFLALDELLPAAKRYAKGHETVYGLVAGMGTLAISLVLFKW.

8 helical membrane passes run 11–31, 40–60, 80–100, 125–145, 158–178, 187–207, 217–237, and 249–269; these read IALA…LLVL, LLAF…LSEI, YGTL…HFIP, ALLT…ATFF, AFAI…PVYF, FSAS…GYWL, FGWV…DELL, and TVYG…LFKW. 2 residues coordinate Fe(2+): asparagine 136 and glutamate 139. Glutamate 139 and histidine 164 together coordinate Zn(2+). Fe(2+) is bound by residues asparagine 165, glutamate 168, and glutamate 197. Glutamate 168 lines the Zn(2+) pocket.

This sequence belongs to the ZIP transporter (TC 2.A.5) family. ZupT subfamily.

The protein localises to the cell inner membrane. The catalysed reaction is Zn(2+)(in) = Zn(2+)(out). Functionally, mediates zinc uptake. May also transport other divalent cations. The polypeptide is Zinc transporter ZupT (Stenotrophomonas maltophilia (strain K279a)).